The primary structure comprises 51 residues: Large ribosomal subunit protein eL39 (51 aa).

It belongs to the eukaryotic ribosomal protein eL39 family.

This is Large ribosomal subunit protein eL39 from Saccharolobus islandicus (strain Y.N.15.51 / Yellowstone #2) (Sulfolobus islandicus).